The primary structure comprises 1199 residues: DNA-directed RNA polymerase subunit beta' (1199 aa).

Residues Cys60, Cys62, Cys75, and Cys78 each coordinate Zn(2+). Asp449, Asp451, and Asp453 together coordinate Mg(2+). Residues Cys818, Cys892, Cys899, and Cys902 each contribute to the Zn(2+) site.

This sequence belongs to the RNA polymerase beta' chain family. The RNAP catalytic core consists of 2 alpha, 1 beta, 1 beta' and 1 omega subunit. When a sigma factor is associated with the core the holoenzyme is formed, which can initiate transcription. Requires Mg(2+) as cofactor. The cofactor is Zn(2+).

It carries out the reaction RNA(n) + a ribonucleoside 5'-triphosphate = RNA(n+1) + diphosphate. Its function is as follows. DNA-dependent RNA polymerase catalyzes the transcription of DNA into RNA using the four ribonucleoside triphosphates as substrates. In Exiguobacterium sibiricum (strain DSM 17290 / CCUG 55495 / CIP 109462 / JCM 13490 / 255-15), this protein is DNA-directed RNA polymerase subunit beta'.